The chain runs to 224 residues: UPF0173 metal-dependent hydrolase Memar_1421 (224 aa).

This sequence belongs to the UPF0173 family.

The chain is UPF0173 metal-dependent hydrolase Memar_1421 from Methanoculleus marisnigri (strain ATCC 35101 / DSM 1498 / JR1).